Here is a 721-residue protein sequence, read N- to C-terminus: Phosphomethylpyrimidine synthase (721 aa).

Substrate-binding positions include Asn256, Met285, Tyr314, His350, Ser370–Gly372, Asp411–Arg414, and Glu450. Residue His454 participates in Zn(2+) binding. Tyr477 contacts substrate. His518 lines the Zn(2+) pocket. [4Fe-4S] cluster-binding residues include Cys598, Cys601, and Cys606.

The protein belongs to the ThiC family. Homodimer. [4Fe-4S] cluster is required as a cofactor.

The catalysed reaction is 5-amino-1-(5-phospho-beta-D-ribosyl)imidazole + S-adenosyl-L-methionine = 4-amino-2-methyl-5-(phosphooxymethyl)pyrimidine + CO + 5'-deoxyadenosine + formate + L-methionine + 3 H(+). The protein operates within cofactor biosynthesis; thiamine diphosphate biosynthesis. Functionally, catalyzes the synthesis of the hydroxymethylpyrimidine phosphate (HMP-P) moiety of thiamine from aminoimidazole ribotide (AIR) in a radical S-adenosyl-L-methionine (SAM)-dependent reaction. The sequence is that of Phosphomethylpyrimidine synthase from Shewanella oneidensis (strain ATCC 700550 / JCM 31522 / CIP 106686 / LMG 19005 / NCIMB 14063 / MR-1).